The chain runs to 359 residues: Fructose-bisphosphate aldolase class 2 (359 aa).

Residue Ser50 participates in D-glyceraldehyde 3-phosphate binding. The active-site Proton donor is the Asp83. Residues His84, Asp105, Glu142, and His198 each contribute to the Zn(2+) site. Dihydroxyacetone phosphate is bound at residue Gly199. His232 contributes to the Zn(2+) binding site. Residues 233-235 and 275-278 contribute to the dihydroxyacetone phosphate site; these read GSS and NIDT.

This sequence belongs to the class II fructose-bisphosphate aldolase family. It depends on Zn(2+) as a cofactor.

It carries out the reaction beta-D-fructose 1,6-bisphosphate = D-glyceraldehyde 3-phosphate + dihydroxyacetone phosphate. It participates in carbohydrate degradation; glycolysis; D-glyceraldehyde 3-phosphate and glycerone phosphate from D-glucose: step 4/4. Its function is as follows. Catalyzes the aldol condensation of dihydroxyacetone phosphate (DHAP or glycerone-phosphate) with glyceraldehyde 3-phosphate (G3P) to form fructose 1,6-bisphosphate (FBP) in gluconeogenesis and the reverse reaction in glycolysis. The protein is Fructose-bisphosphate aldolase class 2 (fbaA) of Synechocystis sp. (strain ATCC 27184 / PCC 6803 / Kazusa).